A 247-amino-acid chain; its full sequence is MAVQVVQAVQAVHLESDAFLVCLNHALSTEKEEVMGLCIGELNDDTRSDSKFAYTGTEMRTVAEKVDAVRIVHIHSVIILRRSDKRKDRVEISPEQLSAASTEAERLAELTGRPMRVVGWYHSHPHITVWPSHVDVRTQAMYQMMDQGFVGLIFSCFIEDKNTKTGRVLYTCFQSIQAQKSSDLTHLDSVTKIHNGSVFTKNLCSQMSAVSGPLLQWLEDRLEQNQQHLQELQQEKEELMQELSSLE.

A2 is subject to N-acetylalanine. The 168-residue stretch at 12 to 179 (VHLESDAFLV…YTCFQSIQAQ (168 aa)) folds into the MPN domain. Residues H122, H124, and D135 each coordinate Zn(2+). The short motif at 122-135 (HSHPHITVWPSHVD) is the JAMM motif element. S189 is subject to Phosphoserine.

This sequence belongs to the peptidase M67A family. BRCC36 subfamily. Component of the ARISC complex, at least composed of UIMC1/RAP80, ABRAXAS1, BRCC3/BRCC36, BABAM2 and BABAM1/NBA1. Component of the BRCA1-A complex, at least composed of BRCA1, BARD1, UIMC1/RAP80, ABRAXAS1, BRCC3/BRCC36, BABAM2 and BABAM1/NBA1. In the BRCA1-A complex, interacts directly with ABRAXAS1 and BABAM2. Component of the BRISC complex, at least composed of ABRAXAS2, BRCC3/BRCC36, BABAM2 and BABAM1/NBA1. Identified in a complex with SHMT2 and the other subunits of the BRISC complex. In the BRISC complex, interacts directly with ABRAXAS2. Identified in a complex with ABRAXAS2 and NUMA1. The BRISC complex interacts with the CSN complex. Component of the BRCA1/BRCA2 containing complex (BRCC), which also contains BRCA1, BRCA2, BARD1, BABAM2 and RAD51. BRCC is a ubiquitin E3 ligase complex that enhances cellular survival following DNA damage. Interacts with BRCA1. Binds polyubiquitin. Interacts with PWWP2B. Interacts with HDAC1; this interaction is enhanced in the presence of PWWP2B. It depends on Zn(2+) as a cofactor.

It localises to the nucleus. The protein localises to the cytoplasm. It is found in the cytoskeleton. Its subcellular location is the spindle pole. Metalloprotease that specifically cleaves 'Lys-63'-linked polyubiquitin chains. Does not have activity toward 'Lys-48'-linked polyubiquitin chains. Component of the BRCA1-A complex, a complex that specifically recognizes 'Lys-63'-linked ubiquitinated histones H2A and H2AX at DNA lesions sites, leading to target the BRCA1-BARD1 heterodimer to sites of DNA damage at double-strand breaks (DSBs). In the BRCA1-A complex, it specifically removes 'Lys-63'-linked ubiquitin on histones H2A and H2AX, antagonizing the RNF8-dependent ubiquitination at double-strand breaks (DSBs). Catalytic subunit of the BRISC complex, a multiprotein complex that specifically cleaves 'Lys-63'-linked ubiquitin in various substrates. Mediates the specific 'Lys-63'-specific deubiquitination associated with the COP9 signalosome complex (CSN), via the interaction of the BRISC complex with the CSN complex. The BRISC complex is required for normal mitotic spindle assembly and microtubule attachment to kinetochores via its role in deubiquitinating NUMA1. Plays a role in interferon signaling via its role in the deubiquitination of the interferon receptor IFNAR1; deubiquitination increases IFNAR1 activity by enhancing its stability and cell surface expression. Acts as a regulator of the NLRP3 inflammasome by mediating deubiquitination of NLRP3, leading to NLRP3 inflammasome assembly. Down-regulates the response to bacterial lipopolysaccharide (LPS) via its role in IFNAR1 deubiquitination. Deubiquitinates HDAC1 and PWWP2B leading to their stabilization. The polypeptide is Lys-63-specific deubiquitinase BRCC36 (BRCC3) (Pongo abelii (Sumatran orangutan)).